The primary structure comprises 1014 residues: MICAL-like protein 2 (1014 aa).

In terms of domain architecture, Calponin-homology (CH) spans 1–107 (MAAIKALQEW…YVSQYYNYFH (107 aa)). The tract at residues 1–261 (MAAIKALQEW…KLSNLASRQP (261 aa)) is forms an intramolecular interaction with the C-terminal coiled coil domain keeping the protein in a closed conformation. Residues Ser110, Ser144, and Ser154 each carry the phosphoserine modification. A disordered region spans residues 114-181 (GMAGMKRPSS…PSPKAAPGTV (68 aa)). The LIM zinc-binding domain maps to 187 to 249 (SICGVCGKHV…THHSSEAVSV (63 aa)). A Phosphoserine modification is found at Ser250. Positions 262 to 394 (GGGIADTRPI…QGQAASKGVK (133 aa)) are necessary and sufficient for interaction with actinins. The mediates targeting to the cell plasma membrane stretch occupies residues 262 to 810 (GGGIADTRPI…QDDQTRSCKE (549 aa)). Disordered stretches follow at residues 311–450 (LTPP…SRVP) and 609–780 (TLPK…RRKK). The span at 332 to 355 (STVTTTSANSKATTHVTNSSPVGW) shows a compositional bias: polar residues. Low complexity predominate over residues 356–368 (SSSAQSSTGTSGS). Residues 384 to 398 (PQGQAASKGVKTQLN) show a composition bias toward polar residues. Low complexity-rich tracts occupy residues 399–419 (SSTD…SSRT) and 438–447 (PASSSSSHAS). Polar residues-rich tracts occupy residues 624-633 (LSHSTTQAFS) and 646-656 (VGSTSWTSVSL). 2 stretches are compositionally biased toward basic and acidic residues: residues 701–711 (EGWRARLKPVD) and 720–737 (LEQK…DTPR). A compositionally biased stretch (polar residues) spans 747 to 758 (IHITLTPIQQKR). A Phosphothreonine modification is found at Thr759. Phosphoserine is present on residues Ser773 and Ser837. Residues 811–918 (KTATWGTRES…LMYKSKDQCL (108 aa)) form a forms an intramolecular interaction with the N-terminal Calponin-homology and LIM zinc-binding domains-containing region keeping the protein in a closed conformation region. The 148-residue stretch at 838 to 985 (PVRLHPNYIS…EQEEDQMLES (148 aa)) folds into the bMERB domain. Positions 845–885 (YISQEELQRQLQDIERQLDALELRGVELEKRLRAAEGDASE) form a coiled coil. Positions 918 to 1014 (LEERQLDLQG…WSSKSKSGQT (97 aa)) are mediates interaction with RAB13 and is required for transition from the closed to the open conformation.

In terms of assembly, interacts with RAB13 (GTP-bound form); competes with RAB8A and is involved in tight junctions assembly. Interacts with RAB8A; competes with RAB13 and is involved in E-cadherin endocytic recycling. Interacts with RAB8B. Interacts (preferentially in opened conformation) with ACTN1 and ACTN4; stimulated by RAB13 activation. Interacts (via calponin-homology (CH) domain) with the filamins FLNA, FLNB and FLNC (via actin-binding domain).

Its subcellular location is the cell membrane. It is found in the cell junction. It localises to the tight junction. The protein resides in the recycling endosome. The protein localises to the cell projection. Its subcellular location is the neuron projection. It is found in the cytoplasm. It localises to the cytoskeleton. In terms of biological role, effector of small Rab GTPases which is involved in junctional complexes assembly through the regulation of cell adhesion molecules transport to the plasma membrane and actin cytoskeleton reorganization. Regulates the endocytic recycling of occludins, claudins and E-cadherin to the plasma membrane and may thereby regulate the establishment of tight junctions and adherens junctions. In parallel, may regulate actin cytoskeleton reorganization directly through interaction with F-actin or indirectly through actinins and filamins. Most probably involved in the processes of epithelial cell differentiation, cell spreading and neurite outgrowth. Undergoes liquid-liquid phase separation to form tubular recycling endosomes. Plays 2 sequential roles in the biogenesis of tubular recycling endosomes: first organizes phase separation and then the closed form formed by interaction with RAB8A promotes endosomal tubulation. The protein is MICAL-like protein 2 (Micall2) of Rattus norvegicus (Rat).